Consider the following 420-residue polypeptide: MHVLSVSEINAQIKALLEATFLQVRVQGEVSNLTIHKVSGHAYFSLKDSQSVIRCVLFKGNANRLKFALKEGQEMVVFGGISVYAPRGDYQINCFEIEPKEIGSLTLALEQLKEKLRLKGYFDEANKLPKPNFPKRVAVITSQNSAAWADMKKIASKRWPMCELVCINTLMQGEGCVQSVVESIAYADSFYDTKNAFDAIVVARGGGSMEDLYSFNDEKIADALYLAKTFSMSAIGHESDFLLSDSVADLRASTPSNAMEILLPSSDEWLQRLDGFNVKLHRSFKTLLHQKKAHLEHLAASLKRLSFENKHHLNALKLEKLTIALDNKTLEFLRLKKTLLEKISTQLSTSPFLQTKTERLNRLENALKLAYANLKLPQFGALVSKNHQAIELEALKRGDKIELSNEKARASAEILSVDRV.

This sequence belongs to the XseA family. Heterooligomer composed of large and small subunits.

It is found in the cytoplasm. It carries out the reaction Exonucleolytic cleavage in either 5'- to 3'- or 3'- to 5'-direction to yield nucleoside 5'-phosphates.. Its function is as follows. Bidirectionally degrades single-stranded DNA into large acid-insoluble oligonucleotides, which are then degraded further into small acid-soluble oligonucleotides. This chain is Exodeoxyribonuclease 7 large subunit, found in Helicobacter pylori (strain J99 / ATCC 700824) (Campylobacter pylori J99).